The chain runs to 249 residues: Vacuolar iron transporter 1 (249 aa).

Topologically, residues 1–36 are cytoplasmic; it reads MADGANDGGNPGAEEQQRLLDQHKEAHFTAGEIVRD. Residues 37-57 form a helical membrane-spanning segment; that stretch reads IIIGVSDGLTVPFALAAGLSG. Residues 58-63 are Vacuolar-facing; that stretch reads ANASSS. A helical transmembrane segment spans residues 64 to 84; the sequence is IVLTAGIAEVAAGAISMGLGG. The Cytoplasmic portion of the chain corresponds to 85–170; it reads YLAAKSEADN…PKRALQSAFT (86 aa). Positions 90 to 165 are cytoplasmic metal binding domain (MBD); the sequence is SEADNYAREL…LEKPDPKRAL (76 aa). Fe cation contacts are provided by Glu-102, Glu-105, Glu-113, Glu-116, Met-149, and Glu-153. Residues 171-191 form a helical membrane-spanning segment; that stretch reads IAIAYVLGGLVPLIPYMFIPV. Over 192–194 the chain is Vacuolar; the sequence is ARK. The helical transmembrane segment at 195–215 threads the bilayer; sequence AVVASVILTLMALLIFGYAKG. At 216-226 the chain is on the cytoplasmic side; it reads YFTDNKPFKSA. A helical transmembrane segment spans residues 227–247; it reads LQTALIGAIASAAAFGMAKAV. Topologically, residues 248-249 are vacuolar; sequence QS.

This sequence belongs to the CCC1 family. As to quaternary structure, homodimer. The dimeric interaction is mediated by both the transmembrane domains (TMDs) and the cytoplasmic metal binding domain (MBD).

It is found in the vacuole membrane. The enzyme catalyses Fe(2+)(in) = Fe(2+)(out). With respect to regulation, transport of iron ions is inhibited by zinc ions. In terms of biological role, vacuolar iron transporter involved in the transfer of iron ions from the cytosol to the vacuole for intracellular iron storage. Can transport cobalt ions from the cytosol to the vacuole. In Eucalyptus grandis (Flooded gum), this protein is Vacuolar iron transporter 1.